A 478-amino-acid polypeptide reads, in one-letter code: Divinyl ether synthase CYP74D1 (478 aa).

Cys431 lines the heme pocket.

Belongs to the cytochrome P450 family. 9-divinyl ether synthase subfamily. In terms of tissue distribution, expressed in roots. Detected in stems, but not in flower buds, petioles, cotyledons or leaves.

It catalyses the reaction (9S)-hydroperoxy-(10E,12Z)-octadecadienoate = colneleate + H2O. It carries out the reaction (9S)-hydroperoxy-(10E,12Z,15Z)-octadecatrienoate = colnelenate + H2O. In terms of biological role, involved in the biosynthesis of the anti-fungal toxins colneleate and colnelenate. Can use (9S)-hydroperoxy-(10E,12Z)-octadecadienoate (9-HPOD) and (9S)-hydroperoxy-(10E,12Z,15Z)-octadecatrienoate (9-HPOT) as substrates, but has a very low activity with the corresponding 13-hydroperoxides (13-HPOD and 13-POT). In Solanum lycopersicum (Tomato), this protein is Divinyl ether synthase CYP74D1.